The sequence spans 411 residues: Phospholipase ABHD3 (411 aa).

A helical; Signal-anchor for type II membrane protein membrane pass occupies residues 25–45 (VGFFGSGVGLSLILGFSVAYA). Positions 140-233 (PTILLLPGLT…MLLLNYLGKI (94 aa)) constitute an AB hydrolase-1 domain. Catalysis depends on charge relay system residues serine 220, aspartate 346, and histidine 375.

Belongs to the AB hydrolase superfamily. AB hydrolase 4 family. Widely expressed with higher expression in liver.

It is found in the membrane. It carries out the reaction a 1,2-diacyl-sn-glycero-3-phosphocholine + H2O = a 1-acyl-sn-glycero-3-phosphocholine + a fatty acid + H(+). The enzyme catalyses a 1,2-diacyl-sn-glycero-3-phosphocholine + H2O = a 2-acyl-sn-glycero-3-phosphocholine + a fatty acid + H(+). The catalysed reaction is 1-tetradecanoyl-2-(9Z,12Z-octadecadienoyl)-sn-glycero-3-phosphocholine + H2O = 2-(9Z,12Z-octadecadienoyl)-sn-glycero-3-phosphocholine + tetradecanoate + H(+). It catalyses the reaction 1-tetradecanoyl-2-(9Z,12Z-octadecadienoyl)-sn-glycero-3-phosphocholine + H2O = 1-tetradecanoyl-sn-glycero-3-phosphocholine + (9Z,12Z)-octadecadienoate + H(+). It carries out the reaction 1-tetradecanoyl-2-(5Z,8Z,11Z,14Z-eicosatetraenoyl)-sn-glycero-3-phosphocholine + H2O = 2-(5Z,8Z,11Z,14Z)-eicosatetraenoyl-sn-glycero-3-phosphocholine + tetradecanoate + H(+). The enzyme catalyses 1-tetradecanoyl-2-(4Z,7Z,10Z,13Z,16Z,19Z-docosahexaenoyl)-sn-glycero-3-phosphocholine + H2O = 2-(4Z,7Z,10Z,13Z,16Z,19Z-docosahexaenoyl)-sn-glycero-3-phosphocholine + tetradecanoate + H(+). The catalysed reaction is 1,2-ditetradecanoyl-sn-glycero-3-phosphocholine + H2O = 2-tetradecanoyl-sn-glycero-3-phosphocholine + tetradecanoate + H(+). It catalyses the reaction 1-octadecanoyl-2-acetyl-sn-glycero-3-phosphocholine + H2O = 1-octadecanoyl-sn-glycero-3-phosphocholine + acetate + H(+). It carries out the reaction 1,2-ditetradecanoyl-sn-glycero-3-phosphocholine + H2O = 1-tetradecanoyl-sn-glycero-3-phosphocholine + tetradecanoate + H(+). The enzyme catalyses 1-octadecanoyl-2-pentanoyl-sn-glycero-3-phosphocholine + H2O = pentanoate + 1-octadecanoyl-sn-glycero-3-phosphocholine + H(+). The catalysed reaction is 1-octadecanoyl-2-hexanoyl-sn-glycero-3-phosphocholine + H2O = hexanoate + 1-octadecanoyl-sn-glycero-3-phosphocholine + H(+). It catalyses the reaction 1-octadecanoyl-2-octanoyl-sn-glycero-3-phosphocholine + H2O = 1-octadecanoyl-sn-glycero-3-phosphocholine + octanoate + H(+). It carries out the reaction 1-octadecanoyl-2-nonanoyl-sn-glycero-3-phosphocholine + H2O = nonanoate + 1-octadecanoyl-sn-glycero-3-phosphocholine + H(+). The enzyme catalyses 1-O-hexadecyl-2-nonadioyl-sn-glycero-3-phosphocholine + H2O = nonanedioate + 1-O-hexadecyl-sn-glycero-3-phosphocholine + H(+). The catalysed reaction is 1-hexadecanoyl-2-nonadioyl-sn-glycero-3-phosphocholine + H2O = nonanedioate + 1-hexadecanoyl-sn-glycero-3-phosphocholine + H(+). It catalyses the reaction 1-hexadecanoyl-2-(9-oxononanoyl)-sn-glycero-3-phosphocholine + H2O = 9-oxononanoate + 1-hexadecanoyl-sn-glycero-3-phosphocholine + H(+). It carries out the reaction 1-hexadecanoyl-2-(5-oxopentanoyl)-sn-glycero-3-phosphocholine + H2O = 5-oxopentanoate + 1-hexadecanoyl-sn-glycero-3-phosphocholine + H(+). The enzyme catalyses 1-hexadecanoyl-2-glutaroyl-sn-glycero-3-phosphocholine + H2O = glutarate + 1-hexadecanoyl-sn-glycero-3-phosphocholine + H(+). The catalysed reaction is 1-O-hexadecyl-2-acetyl-sn-glycero-3-phosphocholine + H2O = 1-O-hexadecyl-sn-glycero-3-phosphocholine + acetate + H(+). Phospholipase that may play a role in phospholipids remodeling. May selectively cleave myristate (C14)-containing phosphatidylcholines through its predominant phospholipase 1 activity, cleaving preferentially acyl groups in sn1 position. In parallel, may have a minor phospholipase 2 activity acting on acyl groups in position sn2. In addition to (C14)-containing phosphatidylcholines, may also act on other medium-chain-containing and oxidatively truncated phospholipids. The sequence is that of Phospholipase ABHD3 from Mus musculus (Mouse).